The following is a 364-amino-acid chain: Chorismate synthase (364 aa).

NADP(+)-binding residues include Arg48 and Arg54. Residues 125 to 127, 238 to 239, Gly278, 293 to 297, and Arg319 each bind FMN; these read RSS, NA, and KPTSS.

The protein belongs to the chorismate synthase family. In terms of assembly, homotetramer. The cofactor is FMNH2.

The enzyme catalyses 5-O-(1-carboxyvinyl)-3-phosphoshikimate = chorismate + phosphate. Its pathway is metabolic intermediate biosynthesis; chorismate biosynthesis; chorismate from D-erythrose 4-phosphate and phosphoenolpyruvate: step 7/7. Catalyzes the anti-1,4-elimination of the C-3 phosphate and the C-6 proR hydrogen from 5-enolpyruvylshikimate-3-phosphate (EPSP) to yield chorismate, which is the branch point compound that serves as the starting substrate for the three terminal pathways of aromatic amino acid biosynthesis. This reaction introduces a second double bond into the aromatic ring system. The chain is Chorismate synthase from Shewanella frigidimarina (strain NCIMB 400).